We begin with the raw amino-acid sequence, 390 residues long: Magnesium-protoporphyrin IX monomethyl ester [oxidative] cyclase (390 aa).

This sequence belongs to the AcsF family. It depends on Fe cation as a cofactor.

It catalyses the reaction Mg-protoporphyrin IX 13-monomethyl ester + 3 NADPH + 3 O2 + 2 H(+) = 3,8-divinyl protochlorophyllide a + 3 NADP(+) + 5 H2O. Its pathway is porphyrin-containing compound metabolism; chlorophyll biosynthesis (light-independent). Its function is as follows. Catalyzes the formation of the isocyclic ring in chlorophyll biosynthesis. Mediates the cyclase reaction, which results in the formation of divinylprotochlorophyllide (Pchlide) characteristic of all chlorophylls from magnesium-protoporphyrin IX 13-monomethyl ester (MgPMME). The protein is Magnesium-protoporphyrin IX monomethyl ester [oxidative] cyclase of Prochlorococcus marinus (strain MIT 9215).